A 647-amino-acid polypeptide reads, in one-letter code: Sialidase (647 aa).

Residues 1-37 form the signal peptide; sequence MTANPYLRRLPRRRAVSFLLAPALAAATVAGASPAQA. Arg68 lines the substrate pocket. Residue Asp92 is the Proton acceptor of the active site. 3 BNR repeats span residues 102 to 113, 175 to 186, and 239 to 250; these read RRSTDGGRTWGE, ATSTDGGLTWSH, and VYSDDHGRTWRA. Glu260 (nucleophile) is an active-site residue. Arg276 is a binding site for substrate. BNR repeat units lie at residues 287 to 298 and 348 to 359; these read AVSTDGGHSYGP and RMSCDDGQTWPV. Tyr370 (nucleophile) is an active-site residue. The F5/8 type C domain maps to 496–646; the sequence is TFTVTVGLLD…AVAELEVEGQ (151 aa).

The protein belongs to the glycosyl hydrolase 33 family.

Its subcellular location is the secreted. The enzyme catalyses Hydrolysis of alpha-(2-&gt;3)-, alpha-(2-&gt;6)-, alpha-(2-&gt;8)- glycosidic linkages of terminal sialic acid residues in oligosaccharides, glycoproteins, glycolipids, colominic acid and synthetic substrates.. Functionally, to release sialic acids for use as carbon and energy sources for this non-pathogenic bacterium while in pathogenic microorganisms, sialidases have been suggested to be pathogenic factors. This chain is Sialidase (nedA), found in Micromonospora viridifaciens.